The following is a 710-amino-acid chain: Cyclin-dependent kinase G-2 (710 aa).

Residues 1–350 (MAAGRHGGYR…ETPEPVKPPH (350 aa)) are disordered. Positions 8–30 (GYRDYEARERELDAEASRRSKEQ) are enriched in basic and acidic residues. Basic residues predominate over residues 31-40 (QHHHHPSGRH). Residues 41–64 (QRGDSDPRCEADRRRDGGRSRGGR) show a composition bias toward basic and acidic residues. Residues 124–133 (SVVAASASSP) are compositionally biased toward low complexity. Residues 144-163 (WDRDSPKPMHSDVAKGKKAV) are compositionally biased toward basic and acidic residues. The segment covering 170-182 (LPLPPPPPLPPQD) has biased composition (pro residues). Composition is skewed to basic and acidic residues over residues 183–195 (HIPE…KSPM) and 209–218 (LQEHAESRVM). Acidic residues predominate over residues 299-308 (DENEDLEVDK). Over residues 335–344 (YEVRRSETPE) the composition is skewed to basic and acidic residues. The Protein kinase domain occupies 365–656 (FERLNKINEG…ADAALQHEWF (292 aa)). ATP-binding positions include 371–379 (INEGTYGVV) and Lys394. Thr375 carries the phosphothreonine modification. Tyr376 carries the post-translational modification Phosphotyrosine. Asp489 serves as the catalytic Proton acceptor. Ser516 carries the phosphoserine modification. At Thr522 the chain carries Phosphothreonine.

The protein belongs to the protein kinase superfamily. CMGC Ser/Thr protein kinase family. CDC2/CDKX subfamily.

It carries out the reaction L-seryl-[protein] + ATP = O-phospho-L-seryl-[protein] + ADP + H(+). The catalysed reaction is L-threonyl-[protein] + ATP = O-phospho-L-threonyl-[protein] + ADP + H(+). The enzyme catalyses [DNA-directed RNA polymerase] + ATP = phospho-[DNA-directed RNA polymerase] + ADP + H(+). This chain is Cyclin-dependent kinase G-2 (CDKG-2), found in Oryza sativa subsp. indica (Rice).